The following is a 185-amino-acid chain: Serine/arginine-rich splicing factor RSZ21 (185 aa).

One can recognise an RRM domain in the interval 2–73 (ARLYVGNLDP…WRVELSRNSS (72 aa)). The segment at 86–103 (MKCYECGETGHFARECRL) adopts a CCHC-type zinc-finger fold. The interval 104 to 185 (RIGPGGLGSG…DGGRYRRSRS (82 aa)) is disordered. The span at 113–123 (GKRRSRSRSRS) shows a compositional bias: basic residues. Composition is skewed to low complexity over residues 124–138 (RSPQ…GRRS) and 151–162 (VSPVRGRSYSRS).

This sequence belongs to the splicing factor SR family. Extensively phosphorylated on serine residues in the RS domain. As to expression, expressed in roots, leaves and immature seeds.

Its subcellular location is the nucleus. Its function is as follows. Involved in pre-mRNA splicing. In Oryza sativa subsp. japonica (Rice), this protein is Serine/arginine-rich splicing factor RSZ21 (RSZP21).